Consider the following 104-residue polypeptide: uncharacterized protein (104 aa).

The next 2 helical transmembrane spans lie at 16–36 (LAFFYIIDGAIIALMLVLASY) and 44–64 (GGFGRIMFYVLFGTFGLFLCI).

The protein resides in the cell membrane. This is an uncharacterized protein from Bacillus anthracis.